Here is a 346-residue protein sequence, read N- to C-terminus: Hydroxymethylglutaryl-CoA synthase (346 aa).

D28 serves as a coordination point for (3S)-3-hydroxy-3-methylglutaryl-CoA. The Proton donor/acceptor role is filled by E80. Residues C112 and T153 each contribute to the (3S)-3-hydroxy-3-methylglutaryl-CoA site. C112 functions as the Acyl-thioester intermediate in the catalytic mechanism. Residue R199 coordinates CoA. (3S)-3-hydroxy-3-methylglutaryl-CoA-binding residues include T201 and H234. The active-site Proton donor/acceptor is the H234. K239 contributes to the CoA binding site. (3S)-3-hydroxy-3-methylglutaryl-CoA contacts are provided by K243, N266, and S296.

It belongs to the thiolase-like superfamily. Archaeal HMG-CoA synthase family. Interacts with acetoacetyl-CoA thiolase that catalyzes the precedent step in the pathway and with a DUF35 protein. The acetoacetyl-CoA thiolase/HMG-CoA synthase complex channels the intermediate via a fused CoA-binding site, which allows for efficient coupling of the endergonic thiolase reaction with the exergonic HMGCS reaction.

It carries out the reaction acetoacetyl-CoA + acetyl-CoA + H2O = (3S)-3-hydroxy-3-methylglutaryl-CoA + CoA + H(+). It participates in metabolic intermediate biosynthesis; (R)-mevalonate biosynthesis; (R)-mevalonate from acetyl-CoA: step 2/3. Catalyzes the condensation of acetyl-CoA with acetoacetyl-CoA to form 3-hydroxy-3-methylglutaryl-CoA (HMG-CoA). Functions in the mevalonate (MVA) pathway leading to isopentenyl diphosphate (IPP), a key precursor for the biosynthesis of isoprenoid compounds that are building blocks of archaeal membrane lipids. The polypeptide is Hydroxymethylglutaryl-CoA synthase (Methanothermobacter thermautotrophicus (strain ATCC 29096 / DSM 1053 / JCM 10044 / NBRC 100330 / Delta H) (Methanobacterium thermoautotrophicum)).